We begin with the raw amino-acid sequence, 224 residues long: ATP-dependent dethiobiotin synthetase BioD (224 aa).

T18 provides a ligand contact to Mg(2+). K39 is an active-site residue. Residue S43 participates in substrate binding. Positions 56 and 117 each coordinate Mg(2+). Residues D56, 117–120 (EGVG), and 177–178 (NE) each bind ATP.

It belongs to the dethiobiotin synthetase family. In terms of assembly, homodimer. The cofactor is Mg(2+).

The protein localises to the cytoplasm. The catalysed reaction is (7R,8S)-7,8-diammoniononanoate + CO2 + ATP = (4R,5S)-dethiobiotin + ADP + phosphate + 3 H(+). It functions in the pathway cofactor biosynthesis; biotin biosynthesis; biotin from 7,8-diaminononanoate: step 1/2. Catalyzes a mechanistically unusual reaction, the ATP-dependent insertion of CO2 between the N7 and N8 nitrogen atoms of 7,8-diaminopelargonic acid (DAPA, also called 7,8-diammoniononanoate) to form a ureido ring. This is ATP-dependent dethiobiotin synthetase BioD from Xanthomonas euvesicatoria pv. vesicatoria (strain 85-10) (Xanthomonas campestris pv. vesicatoria).